A 696-amino-acid polypeptide reads, in one-letter code: TBC1 domain family member 12 (696 aa).

Met-1 carries the N-acetylmethionine modification. 3 disordered regions span residues 1–59 (MMGP…PPPR), 91–121 (PAARGSGMTNGDSGFLLRQDRRGPEEARRRR), and 156–234 (CCLA…ARAR). Acidic residues predominate over residues 46-55 (PPEEAGEEEA). A compositionally biased stretch (basic and acidic residues) spans 108–118 (RQDRRGPEEAR). A Phosphoserine modification is found at Ser-205. Low complexity predominate over residues 209 to 222 (LLPSAGPSAPLPAA). Residue Ser-236 is modified to Phosphoserine. A coiled-coil region spans residues 330–373 (KSVEEALRHRQEYDEMVAEAKKREIKEAHKRKRIMKERFKQEES). The Rab-GAP TBC domain occupies 405–613 (GLPPSVRGKV…RVWDVFCRDG (209 aa)). A Phosphoserine modification is found at Ser-668. Thr-669 bears the Phosphothreonine mark.

Interacts with RAB11A; this interaction recruits TBC1D12 to RAB11A-positive recycling endosomes.

The protein localises to the endosome. RAB11A-binding protein that plays a role in neurite outgrowth. This chain is TBC1 domain family member 12 (Tbc1d12), found in Mus musculus (Mouse).